The chain runs to 347 residues: S-adenosylmethionine decarboxylase proenzyme 4 (347 aa).

Active-site residues include glutamate 7 and glutamate 10. Residue glutamate 66 coordinates substrate. Catalysis depends on serine 67, which acts as the Schiff-base intermediate with substrate; via pyruvic acid. Serine 67 carries the post-translational modification Pyruvic acid (Ser); by autocatalysis. Catalysis depends on cysteine 81, which acts as the Proton donor; for catalytic activity. Catalysis depends on proton acceptor; for processing activity residues serine 237 and histidine 250. Glutamate 254 is a substrate binding site.

This sequence belongs to the eukaryotic AdoMetDC family. The cofactor is pyruvate. Is synthesized initially as an inactive proenzyme. Formation of the active enzyme involves a self-maturation process in which the active site pyruvoyl group is generated from an internal serine residue via an autocatalytic post-translational modification. Two non-identical subunits are generated from the proenzyme in this reaction, and the pyruvate is formed at the N-terminus of the alpha chain, which is derived from the carboxyl end of the proenzyme. The post-translation cleavage follows an unusual pathway, termed non-hydrolytic serinolysis, in which the side chain hydroxyl group of the serine supplies its oxygen atom to form the C-terminus of the beta chain, while the remainder of the serine residue undergoes an oxidative deamination to produce ammonia and the pyruvoyl group blocking the N-terminus of the alpha chain.

The enzyme catalyses S-adenosyl-L-methionine + H(+) = S-adenosyl 3-(methylsulfanyl)propylamine + CO2. Its pathway is amine and polyamine biosynthesis; S-adenosylmethioninamine biosynthesis; S-adenosylmethioninamine from S-adenosyl-L-methionine: step 1/1. Functionally, essential for biosynthesis of the polyamines spermidine and spermine. Essential for polyamine homeostasis, and normal plant embryogenesis, growth and development. In Arabidopsis thaliana (Mouse-ear cress), this protein is S-adenosylmethionine decarboxylase proenzyme 4.